The chain runs to 262 residues: Apolipoprotein A-I (262 aa).

An N-terminal signal peptide occupies residues 1–18 (MKAVVLTLAVLFLTGSQA). 2 tandem repeats follow at residues 67–88 (LKLL…EQLG) and 89–110 (PVTQ…QEMN). The tract at residues 67–262 (LKLLDNWDTL…DEASKKLNAQ (196 aa)) is 10 X approximate tandem repeats. Methionine sulfoxide is present on methionine 109. A 3; half-length repeat occupies 111 to 121 (KDLEEVKQKVQ). 5 consecutive repeat copies span residues 122–142 (PYLD…RQKV), 144–165 (PLGE…DRLS), 166–184 (PLAQ…KQLA), 185–206 (PYSD…EGGG), and 207–227 (SLAE…EKAK). The stretch at 228-238 (PALEDLRQGLM) is one 9; half-length repeat. Methionine sulfoxide is present on methionine 238. Repeat 10 spans residues 239-262 (PVLESLKVSILAAIDEASKKLNAQ).

Belongs to the apolipoprotein A1/A4/E family. As to quaternary structure, homodimer. Interacts with APOA1BP and CLU. Component of a sperm activating protein complex (SPAP), consisting of APOA1, an immunoglobulin heavy chain, an immunoglobulin light chain and albumin. Interacts with NDRG1. Interacts with SCGB3A2. Interacts with NAXE and YJEFN3. Glycosylated. In terms of processing, palmitoylated. Post-translationally, phosphorylation sites are present in the extracellular medium. In terms of tissue distribution, major protein of plasma HDL, also found in chylomicrons.

The protein localises to the secreted. In terms of biological role, participates in the reverse transport of cholesterol from tissues to the liver for excretion by promoting cholesterol efflux from tissues and by acting as a cofactor for the lecithin cholesterol acyltransferase (LCAT). As part of the SPAP complex, activates spermatozoa motility. In Pantholops hodgsonii (Chiru), this protein is Apolipoprotein A-I (APOA1).